The primary structure comprises 230 residues: Sugar fermentation stimulation protein homolog (230 aa).

Belongs to the SfsA family.

In Thermoanaerobacter pseudethanolicus (strain ATCC 33223 / 39E) (Clostridium thermohydrosulfuricum), this protein is Sugar fermentation stimulation protein homolog.